The primary structure comprises 393 residues: 2-methylcitrate synthase (393 aa).

2 residues coordinate substrate: R92 and H207. The active site involves H242. 275-279 (KIMGF) is a CoA binding site. H281 is a catalytic residue. R290 provides a ligand contact to substrate. The active site involves D332. 2 residues coordinate substrate: R357 and R376.

The protein belongs to the citrate synthase family. In terms of assembly, homodimer.

The catalysed reaction is propanoyl-CoA + oxaloacetate + H2O = (2S,3S)-2-methylcitrate + CoA + H(+). It catalyses the reaction oxaloacetate + acetyl-CoA + H2O = citrate + CoA + H(+). It functions in the pathway organic acid metabolism; propanoate degradation. The protein operates within carbohydrate metabolism; tricarboxylic acid cycle; isocitrate from oxaloacetate: step 1/2. In terms of biological role, involved in the catabolism of short chain fatty acids (SCFA) via the tricarboxylic acid (TCA)(acetyl degradation route) and via the 2-methylcitrate cycle I (propionate degradation route). Catalyzes the Claisen condensation of propionyl-CoA and oxaloacetate (OAA) to yield 2-methylcitrate (2-MC) and CoA. Also catalyzes the condensation of oxaloacetate with acetyl-CoA. This chain is 2-methylcitrate synthase (gltA1), found in Mycobacterium tuberculosis (strain ATCC 35801 / TMC 107 / Erdman).